A 283-amino-acid chain; its full sequence is Cyclin-C (283 aa).

The 99-residue stretch at 46 to 144 folds into the Cyclin N-terminal domain; sequence NVIQALGEHL…ILECEFYLLE (99 aa). The tract at residues 252 to 283 is disordered; that stretch reads SILSKMPKPKPPPNSDGEQGTNGSQSSGYSQS. Over residues 267 to 283 the composition is skewed to polar residues; it reads DGEQGTNGSQSSGYSQS.

It belongs to the cyclin family. Cyclin C subfamily. In terms of assembly, component of the Mediator complex. The cylin/CDK pair formed by ccnc/cdk8 also associates with the large subunit of RNA polymerase II.

The protein localises to the nucleus. Its function is as follows. Component of the Mediator complex, a coactivator involved in regulated gene transcription of nearly all RNA polymerase II-dependent genes. Mediator functions as a bridge to convey information from gene-specific regulatory proteins to the basal RNA polymerase II transcription machinery. Mediator is recruited to promoters by direct interactions with regulatory proteins and serves as a scaffold for the assembly of a functional preinitiation complex with RNA polymerase II and the general transcription factors. Binds to and activates cyclin-dependent kinase cdk8 that phosphorylates the CTD (C-terminal domain) of the large subunit of RNA polymerase II (RNAp II), which may inhibit the formation of a transcription initiation complex. The sequence is that of Cyclin-C (ccnc) from Xenopus laevis (African clawed frog).